The following is an 83-amino-acid chain: UPF0297 protein Moth_1643 (83 aa).

Belongs to the UPF0297 family.

This is UPF0297 protein Moth_1643 from Moorella thermoacetica (strain ATCC 39073 / JCM 9320).